The following is a 347-amino-acid chain: Protein O-mannose kinase (347 aa).

The Cytoplasmic segment spans residues 1 to 14 (MGGTAVGGVIGVRC). The helical; Signal-anchor for type II membrane protein transmembrane segment at 15-35 (GVPAVLLCLGALLCANVLLYF) threads the bilayer. The Lumenal segment spans residues 36–347 (YLDALYQNTN…SQSQRVRDML (312 aa)). The Protein kinase domain maps to 79–347 (VRRVKLIGQG…SQSQRVRDML (269 aa)).

Belongs to the protein kinase superfamily. Ser/Thr protein kinase family. STKL subfamily.

It is found in the endoplasmic reticulum membrane. The catalysed reaction is 3-O-[beta-D-GalNAc-(1-&gt;3)-beta-D-GlcNAc-(1-&gt;4)-alpha-D-Man]-L-Thr-[protein] + ATP = 3-O-[beta-D-GalNAc-(1-&gt;3)-beta-D-GlcNAc-(1-&gt;4)-(O-6-P-alpha-D-Man)]-Thr-[protein] + ADP + H(+). Its function is as follows. Protein O-mannose kinase that specifically mediates phosphorylation at the 6-position of an O-mannose of the trisaccharide (N-acetylgalactosamine (GalNAc)-beta-1,3-N-acetylglucosamine (GlcNAc)-beta-1,4-mannose) to generate phosphorylated O-mannosyl trisaccharide (N-acetylgalactosamine-beta-1,3-N-acetylglucosamine-beta-1,4-(phosphate-6-)mannose). Phosphorylated O-mannosyl trisaccharide is a carbohydrate structure present in alpha-dystroglycan (dag1), which is required for binding laminin G-like domain-containing extracellular proteins with high affinity. Only shows kinase activity when the GalNAc-beta-3-GlcNAc-beta-terminus is linked to the 4-position of O-mannose, suggesting that this disaccharide serves as the substrate recognition motif. The protein is Protein O-mannose kinase (pomk) of Danio rerio (Zebrafish).